Consider the following 185-residue polypeptide: MISVNDFRTGLTIAVDNGLWQVLDFQHVKPGKGAAFVRSKLRNLRTGSVQEKTFRAGEKVEKAHIENRRMQYLYASGEAHVFMDNGTYEQIELGEKQIERELKFLKENMEVSIMTYQGEVLGVELPNTVELQVTETEPGIKGDTASNVTKPATLETGLVVQVPIFINEGEMLIINTGEGKYVSRA.

It belongs to the elongation factor P family.

It is found in the cytoplasm. Its pathway is protein biosynthesis; polypeptide chain elongation. Its function is as follows. Involved in peptide bond synthesis. Stimulates efficient translation and peptide-bond synthesis on native or reconstituted 70S ribosomes in vitro. Probably functions indirectly by altering the affinity of the ribosome for aminoacyl-tRNA, thus increasing their reactivity as acceptors for peptidyl transferase. This is Elongation factor P from Bacillus anthracis (strain CDC 684 / NRRL 3495).